A 400-amino-acid chain; its full sequence is Enolase (400 aa).

Gln-153 contacts (2R)-2-phosphoglycerate. The active-site Proton donor is the Glu-195. 3 residues coordinate Mg(2+): Asp-231, Glu-274, and Asp-301. (2R)-2-phosphoglycerate is bound by residues Lys-326, Arg-355, Ser-356, and Lys-377. Residue Lys-326 is the Proton acceptor of the active site.

It belongs to the enolase family. Mg(2+) is required as a cofactor.

It localises to the cytoplasm. The protein resides in the secreted. The protein localises to the cell surface. It carries out the reaction (2R)-2-phosphoglycerate = phosphoenolpyruvate + H2O. The protein operates within carbohydrate degradation; glycolysis; pyruvate from D-glyceraldehyde 3-phosphate: step 4/5. Its function is as follows. Catalyzes the reversible conversion of 2-phosphoglycerate (2-PG) into phosphoenolpyruvate (PEP). It is essential for the degradation of carbohydrates via glycolysis. This Halorubrum lacusprofundi (strain ATCC 49239 / DSM 5036 / JCM 8891 / ACAM 34) protein is Enolase.